The primary structure comprises 101 residues: Urease subunit beta (101 aa).

Belongs to the urease beta subunit family. In terms of assembly, heterotrimer of UreA (gamma), UreB (beta) and UreC (alpha) subunits. Three heterotrimers associate to form the active enzyme.

Its subcellular location is the cytoplasm. The catalysed reaction is urea + 2 H2O + H(+) = hydrogencarbonate + 2 NH4(+). It functions in the pathway nitrogen metabolism; urea degradation; CO(2) and NH(3) from urea (urease route): step 1/1. This Pseudomonas aeruginosa (strain LESB58) protein is Urease subunit beta.